The following is a 395-amino-acid chain: Glutamyl-tRNA reductase (395 aa).

Residues 45-48 (TCNR), S87, 92-94 (EDQ), and Q98 each bind substrate. C46 serves as the catalytic Nucleophile. 167 to 172 (GAGEMG) is an NADP(+) binding site.

This sequence belongs to the glutamyl-tRNA reductase family. As to quaternary structure, homodimer.

The enzyme catalyses (S)-4-amino-5-oxopentanoate + tRNA(Glu) + NADP(+) = L-glutamyl-tRNA(Glu) + NADPH + H(+). The protein operates within porphyrin-containing compound metabolism; protoporphyrin-IX biosynthesis; 5-aminolevulinate from L-glutamyl-tRNA(Glu): step 1/2. In terms of biological role, catalyzes the NADPH-dependent reduction of glutamyl-tRNA(Glu) to glutamate 1-semialdehyde (GSA). This is Glutamyl-tRNA reductase from Methanosphaera stadtmanae (strain ATCC 43021 / DSM 3091 / JCM 11832 / MCB-3).